The following is a 441-amino-acid chain: Plasmepsin VI (441 aa).

Residues 1-7 (MTNFCIK) lie on the Cytoplasmic side of the membrane. The helical; Signal-anchor for type II membrane protein transmembrane segment at 8–28 (SYLFLYLSFLLFFDIITIFHV) threads the bilayer. Residues 29–441 (SSIRISTVLK…VGVVKSNHNF (413 aa)) are Extracellular-facing. Positions 109–435 (FIGDIEIGNP…DNDHKLVGVV (327 aa)) constitute a Peptidase A1 domain. Residues D127 and D324 contribute to the active site.

Belongs to the peptidase A1 family.

The protein resides in the membrane. Its function is as follows. During the development in the mosquito midgut, plays a role in sporozoite egress from oocysts. The chain is Plasmepsin VI from Plasmodium berghei (strain Anka).